Here is a 473-residue protein sequence, read N- to C-terminus: Photosystem II CP43 reaction center protein (473 aa).

A propeptide spanning residues methionine 1 to glutamate 14 is cleaved from the precursor. At threonine 15 the chain carries N-acetylthreonine. A Phosphothreonine modification is found at threonine 15. 5 consecutive transmembrane segments (helical) span residues leucine 69–alanine 93, leucine 134–asparagine 155, lysine 178–threonine 200, lysine 255–serine 275, and tryptophan 291–alanine 312. Residue glutamate 367 participates in [CaMn4O5] cluster binding. The helical transmembrane segment at arginine 447–proline 471 threads the bilayer.

Belongs to the PsbB/PsbC family. PsbC subfamily. In terms of assembly, PSII is composed of 1 copy each of membrane proteins PsbA, PsbB, PsbC, PsbD, PsbE, PsbF, PsbH, PsbI, PsbJ, PsbK, PsbL, PsbM, PsbT, PsbX, PsbY, PsbZ, Psb30/Ycf12, at least 3 peripheral proteins of the oxygen-evolving complex and a large number of cofactors. It forms dimeric complexes. It depends on Binds multiple chlorophylls and provides some of the ligands for the Ca-4Mn-5O cluster of the oxygen-evolving complex. It may also provide a ligand for a Cl- that is required for oxygen evolution. PSII binds additional chlorophylls, carotenoids and specific lipids. as a cofactor.

The protein localises to the plastid. It localises to the chloroplast thylakoid membrane. One of the components of the core complex of photosystem II (PSII). It binds chlorophyll and helps catalyze the primary light-induced photochemical processes of PSII. PSII is a light-driven water:plastoquinone oxidoreductase, using light energy to abstract electrons from H(2)O, generating O(2) and a proton gradient subsequently used for ATP formation. In Piper cenocladum (Ant piper), this protein is Photosystem II CP43 reaction center protein.